A 91-amino-acid polypeptide reads, in one-letter code: Small ribosomal subunit protein bS20 (91 aa).

It belongs to the bacterial ribosomal protein bS20 family.

Binds directly to 16S ribosomal RNA. The polypeptide is Small ribosomal subunit protein bS20 (Mycoplasma mobile (strain ATCC 43663 / 163K / NCTC 11711) (Mesomycoplasma mobile)).